The sequence spans 206 residues: N-(5'-phosphoribosyl)anthranilate isomerase (206 aa).

The protein belongs to the TrpF family.

The enzyme catalyses N-(5-phospho-beta-D-ribosyl)anthranilate = 1-(2-carboxyphenylamino)-1-deoxy-D-ribulose 5-phosphate. The protein operates within amino-acid biosynthesis; L-tryptophan biosynthesis; L-tryptophan from chorismate: step 3/5. This Pseudomonas savastanoi pv. phaseolicola (strain 1448A / Race 6) (Pseudomonas syringae pv. phaseolicola (strain 1448A / Race 6)) protein is N-(5'-phosphoribosyl)anthranilate isomerase.